A 117-amino-acid chain; its full sequence is UPF0102 protein RSKD131_0118 (117 aa).

The protein belongs to the UPF0102 family.

This Cereibacter sphaeroides (strain KD131 / KCTC 12085) (Rhodobacter sphaeroides) protein is UPF0102 protein RSKD131_0118.